The primary structure comprises 407 residues: Aminoacylase-1 (407 aa).

At Ala2 the chain carries N-acetylalanine. His80 serves as a coordination point for Zn(2+). Residue Asp82 is part of the active site. Asp113 serves as a coordination point for Zn(2+). Glu147 serves as the catalytic Proton acceptor. The Zn(2+) site is built by Glu148, Glu175, and His372.

It belongs to the peptidase M20A family. In terms of assembly, homodimer. Interacts with SPHK1. Zn(2+) serves as cofactor.

The protein localises to the cytoplasm. The catalysed reaction is an N-acyl-L-amino acid + H2O = an L-alpha-amino acid + a carboxylate. It catalyses the reaction N-acetyl-L-methionine + H2O = L-methionine + acetate. It carries out the reaction N-acetyl-L-glutamine + H2O = L-glutamine + acetate. Its function is as follows. Catalyzes the hydrolysis of N-acetylated amino acids to acetate and free amino acids. This chain is Aminoacylase-1 (ACY1), found in Sus scrofa (Pig).